The following is a 198-amino-acid chain: Protein XA-1 (198 aa).

A signal peptide spans 1–18 (MFFYVLLLALMAQGWSLP). Residues 17-198 (LPQGKTGEDS…KHGQEQGKKH (182 aa)) are disordered. Residues 29–44 (FRPPSPPMGPSLPPPV) are compositionally biased toward pro residues. Residues 46–59 (HDLHRPSGHPEEFR) are compositionally biased toward basic and acidic residues. The span at 76–86 (GRPKRDLHHGK) shows a compositional bias: basic residues. Residues 95-104 (HTGEVLHHTD) show a composition bias toward basic and acidic residues. Over residues 134-145 (HGRHRRDLHHGK) the composition is skewed to basic residues. Residues 181–198 (NSSEEKRPKHGQEQGKKH) are compositionally biased toward basic and acidic residues.

In terms of tissue distribution, expressed in the periphery of the cement gland as well as in the region of the hatching gland.

The protein resides in the secreted. This is Protein XA-1 from Xenopus laevis (African clawed frog).